Consider the following 247-residue polypeptide: Probable transcriptional regulatory protein YPK_2146 (247 aa).

It belongs to the TACO1 family.

The protein resides in the cytoplasm. This is Probable transcriptional regulatory protein YPK_2146 from Yersinia pseudotuberculosis serotype O:3 (strain YPIII).